The following is a 59-amino-acid chain: Large ribosomal subunit protein uL30 (59 aa).

Belongs to the universal ribosomal protein uL30 family. As to quaternary structure, part of the 50S ribosomal subunit.

The polypeptide is Large ribosomal subunit protein uL30 (Haemophilus ducreyi (strain 35000HP / ATCC 700724)).